The primary structure comprises 3214 residues: Ciliogenesis and planar polarity effector 1 (3214 aa).

2 helical membrane passes run 593–613 (KLML…LQFI) and 632–652 (AWVL…YWDM). Disordered stretches follow at residues 1496 to 1523 (VGKK…ETPG), 1644 to 1667 (GNQS…PLQS), 1879 to 1991 (DGRH…HRAQ), 2047 to 2142 (FGES…FPPA), 2214 to 2241 (SLSD…SSHC), 2398 to 2440 (GITQ…ISND), 2491 to 2529 (GSHD…GHEP), 2622 to 2650 (TFQS…QSGE), 2824 to 2855 (VSLQ…HSSQ), 3037 to 3127 (TAPA…CRED), and 3158 to 3181 (MSPA…VSES). The span at 1512 to 1523 (NSQRKEDDETPG) shows a compositional bias: basic and acidic residues. Over residues 1932–1942 (QCSRKEPRDAS) the composition is skewed to basic and acidic residues. Polar residues-rich tracts occupy residues 1943 to 1953 (VDTNLTEQKGA), 1971 to 1984 (NGAQ…QKTQ), and 2047 to 2068 (FGES…SRQR). Basic and acidic residues predominate over residues 2079-2099 (CTREPGKNSPADHKRISRPDQ). The span at 2215–2241 (LSDSCQPPVSQRTVHTTLPSPSDSSHC) shows a compositional bias: polar residues. Positions 2500 to 2514 (DPDKEGPSQKADSES) are enriched in basic and acidic residues. 2 stretches are compositionally biased toward polar residues: residues 2515–2524 (SKNPQATAAS) and 2622–2634 (TFQS…STRG). Residues 2830–2848 (EDVEEQKDAEETSETEFSE) show a composition bias toward acidic residues. Residues 3090–3107 (RGSSQLRGSQPPCQSQKP) are compositionally biased toward polar residues.

In terms of assembly, interacts with FUZ; INTU and WDPCP; the interactors are proposed to form the core CPLANE (ciliogenesis and planar polarity effectors) complex.

The protein localises to the membrane. The protein resides in the cell projection. It localises to the cilium. Its function is as follows. Involved in ciliogenesis. Involved in the establishment of cell polarity required for directional cell migration. Proposed to act in association with the CPLANE (ciliogenesis and planar polarity effectors) complex. Involved in recruitment of peripheral IFT-A proteins to basal bodies. The chain is Ciliogenesis and planar polarity effector 1 from Mus musculus (Mouse).